A 154-amino-acid polypeptide reads, in one-letter code: Putative pre-16S rRNA nuclease (154 aa).

Belongs to the YqgF nuclease family.

It is found in the cytoplasm. Its function is as follows. Could be a nuclease involved in processing of the 5'-end of pre-16S rRNA. This is Putative pre-16S rRNA nuclease from Gluconacetobacter diazotrophicus (strain ATCC 49037 / DSM 5601 / CCUG 37298 / CIP 103539 / LMG 7603 / PAl5).